A 419-amino-acid chain; its full sequence is RNA polymerase sigma factor sigD, chloroplastic (419 aa).

The transit peptide at 1-52 (MATTIPTTATATMCPSPPVPTISPLLRTTHQCQPSPSLSSPFSIKLSTALVC) directs the protein to the chloroplast. The Polymerase core binding signature appears at 207–220 (DLIQEGSIGLLRGA). Residues 377 to 396 (FEEIGKSLKLSRERVRQING) constitute a DNA-binding region (H-T-H motif).

Belongs to the sigma-70 factor family. In terms of tissue distribution, mostly expressed in leaves, and to a lesser extent in roots. Present in seedlings.

It is found in the plastid. The protein resides in the chloroplast. In terms of biological role, sigma factors are initiation factors that promote the attachment of plastid-encoded RNA polymerase (PEP) to specific initiation sites and are then released. Regulates transcription of the ndhF gene which codes for a subunit of the plastid NDH [NAD(P)H dehydrogenase] complex. This is RNA polymerase sigma factor sigD, chloroplastic (SIGD) from Arabidopsis thaliana (Mouse-ear cress).